The sequence spans 183 residues: Putative 3-methyladenine DNA glycosylase (183 aa).

The protein belongs to the DNA glycosylase MPG family.

This Legionella pneumophila subsp. pneumophila (strain Philadelphia 1 / ATCC 33152 / DSM 7513) protein is Putative 3-methyladenine DNA glycosylase.